The primary structure comprises 765 residues: Phosphoribosylformylglycinamidine synthase subunit PurL (765 aa).

Histidine 41 is a catalytic residue. Tyrosine 44 and lysine 83 together coordinate ATP. Glutamate 85 is a binding site for Mg(2+). Residues 86–89 (SHNH) and arginine 108 contribute to the substrate site. Catalysis depends on histidine 87, which acts as the Proton acceptor. Aspartate 109 is a binding site for Mg(2+). Residue glutamine 232 participates in substrate binding. Aspartate 260 provides a ligand contact to Mg(2+). 304 to 306 (ESQ) provides a ligand contact to substrate. Residues aspartate 503 and glycine 540 each contribute to the ATP site. Position 541 (asparagine 541) interacts with Mg(2+). Serine 543 lines the substrate pocket.

This sequence belongs to the FGAMS family. As to quaternary structure, monomer. Part of the FGAM synthase complex composed of 1 PurL, 1 PurQ and 2 PurS subunits.

It is found in the cytoplasm. It catalyses the reaction N(2)-formyl-N(1)-(5-phospho-beta-D-ribosyl)glycinamide + L-glutamine + ATP + H2O = 2-formamido-N(1)-(5-O-phospho-beta-D-ribosyl)acetamidine + L-glutamate + ADP + phosphate + H(+). The protein operates within purine metabolism; IMP biosynthesis via de novo pathway; 5-amino-1-(5-phospho-D-ribosyl)imidazole from N(2)-formyl-N(1)-(5-phospho-D-ribosyl)glycinamide: step 1/2. Part of the phosphoribosylformylglycinamidine synthase complex involved in the purines biosynthetic pathway. Catalyzes the ATP-dependent conversion of formylglycinamide ribonucleotide (FGAR) and glutamine to yield formylglycinamidine ribonucleotide (FGAM) and glutamate. The FGAM synthase complex is composed of three subunits. PurQ produces an ammonia molecule by converting glutamine to glutamate. PurL transfers the ammonia molecule to FGAR to form FGAM in an ATP-dependent manner. PurS interacts with PurQ and PurL and is thought to assist in the transfer of the ammonia molecule from PurQ to PurL. This chain is Phosphoribosylformylglycinamidine synthase subunit PurL, found in Synechococcus sp. (strain WH7803).